An 89-amino-acid polypeptide reads, in one-letter code: Putative regulatory protein BPUM_1466 (89 aa).

It belongs to the RemA family.

The chain is Putative regulatory protein BPUM_1466 from Bacillus pumilus (strain SAFR-032).